A 420-amino-acid chain; its full sequence is UDP-N-acetyl-D-mannosamine dehydrogenase (420 aa).

Residues tyrosine 13, isoleucine 14, aspartate 33, threonine 85, and threonine 126 each contribute to the NAD(+) site. 8 residues coordinate UDP-N-acetyl-alpha-D-mannosaminouronate: arginine 160, valine 161, lysine 212, asparagine 216, arginine 219, histidine 250, arginine 252, and glycine 263. Residue lysine 212 is the Proton donor/acceptor of the active site. The active-site Nucleophile is cysteine 266. Phenylalanine 330 and lysine 331 together coordinate UDP-N-acetyl-alpha-D-mannosaminouronate. Arginine 338 contacts NAD(+). Residue lysine 416 participates in UDP-N-acetyl-alpha-D-mannosaminouronate binding.

Belongs to the UDP-glucose/GDP-mannose dehydrogenase family. WecC subfamily. Homodimer.

The catalysed reaction is UDP-N-acetyl-alpha-D-mannosamine + 2 NAD(+) + H2O = UDP-N-acetyl-alpha-D-mannosaminouronate + 2 NADH + 3 H(+). It participates in bacterial outer membrane biogenesis; enterobacterial common antigen biosynthesis. In terms of biological role, catalyzes the four-electron oxidation of UDP-N-acetyl-D-mannosamine (UDP-ManNAc), reducing NAD(+) and releasing UDP-N-acetylmannosaminuronic acid (UDP-ManNAcA). The polypeptide is UDP-N-acetyl-D-mannosamine dehydrogenase (Shigella flexneri).